A 201-amino-acid chain; its full sequence is MTDPVTLDGEGTIGEFDEKRAENAVRELLIAVGEDPDREGLRETPGRVARAYREIFAGLWQKPEDVLTTTFDIGHDEMVLVKDIEVLSSCEHHLVPFVGVAHVGYIPSTDGKITGLSKLARLVDVYARRPQVQERLTTQVADSLMEILEPRGVIVVVECEHMCMSMRGVRKPGAKTITSAVRGQLRDPATRNEAMSLIMAR.

Residues cysteine 90, histidine 93, and cysteine 163 each contribute to the Zn(2+) site.

It belongs to the GTP cyclohydrolase I family. Toroid-shaped homodecamer, composed of two pentamers of five dimers.

The enzyme catalyses GTP + H2O = 7,8-dihydroneopterin 3'-triphosphate + formate + H(+). It participates in cofactor biosynthesis; 7,8-dihydroneopterin triphosphate biosynthesis; 7,8-dihydroneopterin triphosphate from GTP: step 1/1. The protein is GTP cyclohydrolase 1 of Streptomyces avermitilis (strain ATCC 31267 / DSM 46492 / JCM 5070 / NBRC 14893 / NCIMB 12804 / NRRL 8165 / MA-4680).